Consider the following 417-residue polypeptide: MDVKAYMQKLGQQAREASRQLMVATTRQKNTALLNIATALEEQAETLKTENAKDLEQGKANGLDAAMLDRLALTDKVINGMATGLRQIAALNDPIGEISDMNYLPSGIQVGKMRVPLGVVGIIYESRPNVTIDAAALCLKSGNAALLRGGSEAAYSNRALAKCIQSALHESGLLPTAVQVVETTDRAAVGEMIAMPEYVDVIIPRGGKGLIERISEGAKVPVIKHLDGICHVYIDDDADADKATRVAFNAKTHRYGVCNAMETLLIADSRAAEILPGLVELYEEKGVELRGCEQTRAICDMKAATEEDWATEYLAPILSIKVVDDVDEAIDHITQYSSGHTESIITENLTTSRQFLARVDSSSVMVNASTRFADGFEYGLGAEIGISTDKFHARGPVGLEGLTSQKYIVLGDGTIRE.

Belongs to the gamma-glutamyl phosphate reductase family.

The protein localises to the cytoplasm. The catalysed reaction is L-glutamate 5-semialdehyde + phosphate + NADP(+) = L-glutamyl 5-phosphate + NADPH + H(+). It participates in amino-acid biosynthesis; L-proline biosynthesis; L-glutamate 5-semialdehyde from L-glutamate: step 2/2. In terms of biological role, catalyzes the NADPH-dependent reduction of L-glutamate 5-phosphate into L-glutamate 5-semialdehyde and phosphate. The product spontaneously undergoes cyclization to form 1-pyrroline-5-carboxylate. This chain is Gamma-glutamyl phosphate reductase, found in Hydrogenovibrio crunogenus (strain DSM 25203 / XCL-2) (Thiomicrospira crunogena).